The following is a 1450-amino-acid chain: DNA-directed RNA polymerase RPB1 homolog (1450 aa).

Belongs to the RNA polymerase beta' chain family. As to quaternary structure, part of the viral DNA-directed RNA polymerase that consists of 8 polII-like subunits (RPB1, RPB2, RPB3, RPB5, RPB6, RPB7, RPB9, RPB10), a capping enzyme and a termination factor.

The protein resides in the virion. It carries out the reaction RNA(n) + a ribonucleoside 5'-triphosphate = RNA(n+1) + diphosphate. In terms of biological role, catalytic component of the DNA-directed RNA polymerase (RNAP) that catalyzes the transcription in the cytoplasm of viral DNA into RNA using the four ribonucleoside triphosphates as substrates. Forms the polymerase active center together with RPB2. Part of the core element with the central large cleft, the clamp element that moves to open and close the cleft and the jaws that are thought to grab the incoming DNA template. The protein is DNA-directed RNA polymerase RPB1 homolog of African swine fever virus (strain Badajoz 1971 Vero-adapted) (Ba71V).